The primary structure comprises 585 residues: ATP-dependent lipid A-core flippase (585 aa).

Helical transmembrane passes span 16–36 (LWPYISFYKAGLSVAVVALII), 66–86 (FLSMMPYYLVGLMILRGASGF), 156–176 (IIGLMALMFWNSWQLSAILLV), 252–272 (AIANPVIQVIASFALVVVLVL), and 278–298 (LRAELTPGTFAVVFGAMFGLM). An ABC transmembrane type-1 domain is found at 29 to 313 (VAVVALIINA…LTNVTSQFQR (285 aa)). The 237-residue stretch at 345-581 (IQVKNVTFTY…DGAYAQLHRI (237 aa)) folds into the ABC transporter domain. 379–386 (GRSGSGKS) contributes to the ATP binding site.

The protein belongs to the ABC transporter superfamily. Lipid exporter (TC 3.A.1.106) family. In terms of assembly, homodimer.

It is found in the cell inner membrane. It catalyses the reaction ATP + H2O + lipid A-core oligosaccharideSide 1 = ADP + phosphate + lipid A-core oligosaccharideSide 2.. Involved in lipopolysaccharide (LPS) biosynthesis. Translocates lipid A-core from the inner to the outer leaflet of the inner membrane. Transmembrane domains (TMD) form a pore in the inner membrane and the ATP-binding domain (NBD) is responsible for energy generation. The chain is ATP-dependent lipid A-core flippase from Photobacterium profundum (strain SS9).